Here is a 318-residue protein sequence, read N- to C-terminus: Taste receptor type 2 member 7 (318 aa).

Residues 1–9 are Extracellular-facing; it reads MTDKVQTTL. Residues 10-30 traverse the membrane as a helical segment; that stretch reads LFLAVGEFSVGILGNAFIGLV. Topologically, residues 31-55 are cytoplasmic; sequence NCMDWIKKRKIASIDLILTSLAISR. The helical transmembrane segment at 56–76 threads the bilayer; it reads ICLLCVILLDCFILVLYPDVY. Residues 77–94 are Extracellular-facing; it reads ATGKEMRIIDFFWILTNH. A helical membrane pass occupies residues 95–115; the sequence is LSIWFATCLSIYYFFKIANFF. The Cytoplasmic segment spans residues 116–128; the sequence is HPLFLWMKWRIDR. Residues 129 to 149 traverse the membrane as a helical segment; the sequence is VISWILLGCMVLSVFISLPAT. Residues 150 to 187 are Extracellular-facing; that stretch reads ENLNADFRFCVKAKRKTNLTWSCRVNKTQHASIKLLLN. Residues N167 and N175 are each glycosylated (N-linked (GlcNAc...) asparagine). Residues 188–208 traverse the membrane as a helical segment; sequence LATLLPFCVCLMSFFLLILSL. At 209–235 the chain is on the cytoplasmic side; the sequence is RRHIRRMQLSATGCRDPSTEAHVRALK. The chain crosses the membrane as a helical span at residues 236-256; the sequence is AVISFLLLFIAYYLSFLIATS. Residues 257 to 266 are Extracellular-facing; that stretch reads SYFMPETELA. Residues 267 to 287 form a helical membrane-spanning segment; sequence VIFGESIALIYPSSHSFILIL. Residues 288-318 are Cytoplasmic-facing; sequence GNNKLRHASLKVIWKVMSILKGRKFQQHKQI.

Belongs to the G-protein coupled receptor T2R family.

Its subcellular location is the membrane. Its function is as follows. Gustducin-coupled receptor implicated in the perception of bitter compounds in the oral cavity and the gastrointestinal tract. Signals through PLCB2 and the calcium-regulated cation channel TRPM5. In Pongo pygmaeus (Bornean orangutan), this protein is Taste receptor type 2 member 7 (TAS2R7).